Reading from the N-terminus, the 286-residue chain is Small ribosomal subunit protein uS2 (286 aa).

Residues 257 to 286 (KDNKSNKSNTINADENIKESDLIGGSNNEG) form a disordered region.

This sequence belongs to the universal ribosomal protein uS2 family.

The chain is Small ribosomal subunit protein uS2 from Ehrlichia ruminantium (strain Gardel).